The chain runs to 1593 residues: DNA-directed RNA polymerase subunit beta' (1593 aa).

Zn(2+)-binding residues include Cys74, Cys76, Cys89, and Cys92. Mg(2+) is bound by residues Asp648, Asp650, and Asp652. 4 residues coordinate Zn(2+): Cys1026, Cys1100, Cys1107, and Cys1110.

This sequence belongs to the RNA polymerase beta' chain family. The RNAP catalytic core consists of 2 alpha, 1 beta, 1 beta' and 1 omega subunit. When a sigma factor is associated with the core the holoenzyme is formed, which can initiate transcription. The cofactor is Mg(2+). Requires Zn(2+) as cofactor.

The catalysed reaction is RNA(n) + a ribonucleoside 5'-triphosphate = RNA(n+1) + diphosphate. In terms of biological role, DNA-dependent RNA polymerase catalyzes the transcription of DNA into RNA using the four ribonucleoside triphosphates as substrates. This is DNA-directed RNA polymerase subunit beta' from Endomicrobium trichonymphae.